We begin with the raw amino-acid sequence, 109 residues long: Ferredoxin (109 aa).

2 consecutive 4Fe-4S ferredoxin-type domains span residues 2–30 (TYVVTDECVKCKYTDCVEVCPVDCFYEGE) and 31–60 (FMLVINPDECIDCGVCVPDCPIDAIKPESP). [3Fe-4S] cluster contacts are provided by Cys9 and Cys17. Residues Cys21, Cys40, Cys43, and Cys46 each contribute to the [4Fe-4S] cluster site. Cys50 contacts [3Fe-4S] cluster.

[4Fe-4S] cluster is required as a cofactor. Requires [3Fe-4S] cluster as cofactor.

Its function is as follows. Ferredoxins are iron-sulfur proteins that transfer electrons in a wide variety of metabolic reactions. In Rickettsia prowazekii (strain Madrid E), this protein is Ferredoxin (fdxA).